Reading from the N-terminus, the 197-residue chain is Transcription factor FapR (197 aa).

This sequence belongs to the FapR family.

Functionally, transcriptional factor involved in regulation of membrane lipid biosynthesis by repressing genes involved in fatty acid and phospholipid metabolism. In Bacillus mycoides (strain KBAB4) (Bacillus weihenstephanensis), this protein is Transcription factor FapR.